Here is a 400-residue protein sequence, read N- to C-terminus: MLPRALLLSFCAAALQLVSSKRDLVLVKEALSWYDAQQHCRLHYTDLADLQPSGLWKLYSLMTSTPAWIGLFFDASTSGLRWSSGSTFTALEWGQKLPEFGVGFCATLYTWLKLPSIGAASCTAQKPFLCYCDPDVGHLISTKPSLSLTTSPKPAVVQISGQTFMRFDQVMTWSSALLYCRSHHTDLADLQMVTDETGKEALRSIMSETEAWIGLYLNANSGSLSWSSDLGASIPSWLQVPMMVRGLCTALGIYMTYSPKVYSVNCSSLLPFFCFYDSSTGHRASAELPPLFHTSPTEMTEETTPRPGRAVASVGSGTDRRDTAAATEAQHLSSESKEKTSAQKSGHPFGILKADFTISTLMDPEEMKDQFLRQIQEVLKLTLGHEQFRLKWVSFEVNKK.

An N-terminal signal peptide occupies residues 1–20; the sequence is MLPRALLLSFCAAALQLVSS. C-type lectin domains are found at residues 26-131 and 159-275; these read LVKE…FLCY and ISGQ…FFCF. 4 disulfide bridges follow: Cys40–Cys130, Cys105–Cys122, Cys180–Cys274, and Cys248–Cys266. A disordered region spans residues 287 to 346; the sequence is ELPPLFHTSPTEMTEETTPRPGRAVASVGSGTDRRDTAAATEAQHLSSESKEKTSAQKSG.

This is Putative C-type lectin domain family 20 member A from Homo sapiens (Human).